We begin with the raw amino-acid sequence, 286 residues long: ATP synthase gamma chain (286 aa).

This sequence belongs to the ATPase gamma chain family. F-type ATPases have 2 components, CF(1) - the catalytic core - and CF(0) - the membrane proton channel. CF(1) has five subunits: alpha(3), beta(3), gamma(1), delta(1), epsilon(1). CF(0) has three main subunits: a, b and c.

It localises to the cell inner membrane. Functionally, produces ATP from ADP in the presence of a proton gradient across the membrane. The gamma chain is believed to be important in regulating ATPase activity and the flow of protons through the CF(0) complex. This chain is ATP synthase gamma chain, found in Pseudomonas putida (strain W619).